We begin with the raw amino-acid sequence, 203 residues long: Dual-action ribosomal maturation protein DarP (203 aa).

Disordered stretches follow at residues Met1 to Gln31 and Gly183 to Ala203. The segment covering Asp186 to Ala203 has biased composition (acidic residues).

Belongs to the DarP family.

It localises to the cytoplasm. Functionally, member of a network of 50S ribosomal subunit biogenesis factors which assembles along the 30S-50S interface, preventing incorrect 23S rRNA structures from forming. Promotes peptidyl transferase center (PTC) maturation. The sequence is that of Dual-action ribosomal maturation protein DarP from Burkholderia cenocepacia (strain ATCC BAA-245 / DSM 16553 / LMG 16656 / NCTC 13227 / J2315 / CF5610) (Burkholderia cepacia (strain J2315)).